We begin with the raw amino-acid sequence, 261 residues long: Synaptophysin-like protein 1 (261 aa).

Topologically, residues 1-33 (MASKANMVRQRFSRLSQRMSAFQINLNPLKEPL) are cytoplasmic. The region spanning 28-239 (PLKEPLGFIK…NAWFVYKETS (212 aa)) is the MARVEL domain. A helical transmembrane segment spans residues 34–54 (GFIKILEWFASIFAFATCGGF). Residues 55–117 (KGKTEIQVNC…LIGDYSSSAQ (63 aa)) are Vesicular-facing. N-linked (GlcNAc...) asparagine glycans are attached at residues asparagine 72 and asparagine 95. Residues 118-138 (FYVTFAVFVFLYCIAALLLYV) traverse the membrane as a helical segment. Residues 139 to 151 (GYTNLYRDSRKLP) lie on the Cytoplasmic side of the membrane. A helical membrane pass occupies residues 152 to 172 (MIDFIVTLVATFLWLVSSSAW). Topologically, residues 173–214 (AKALTDIKVATGHRIVEELEICNPESGVSCYFVSVTSMGSLN) are vesicular. The N-linked (GlcNAc...) asparagine glycan is linked to asparagine 214. A helical membrane pass occupies residues 215-235 (VSVIFGFLNMILWGGNAWFVY). At 236–261 (KETSLHSPSNTSASHSQGGGPPTSGM) the chain is on the cytoplasmic side. Residues 241–251 (HSPSNTSASHS) are compositionally biased toward polar residues. Residues 241–261 (HSPSNTSASHSQGGGPPTSGM) are disordered. Gly residues predominate over residues 252 to 261 (QGGGPPTSGM).

Belongs to the synaptophysin/synaptobrevin family. In terms of tissue distribution, ubiquitously expressed.

It localises to the cytoplasmic vesicle membrane. Its subcellular location is the melanosome. The protein is Synaptophysin-like protein 1 (Sypl1) of Mus musculus (Mouse).